Consider the following 58-residue polypeptide: Conotoxin Ar5.4 (58 aa).

Positions 1–20 are excised as a propeptide; the sequence is RIQSDLIRAALEDADMKNEK.

Belongs to the conotoxin T superfamily. Post-translationally, contains 2 disulfide bonds that can be either 'C1-C3, C2-C4' or 'C1-C4, C2-C3', since these disulfide connectivities have been observed for conotoxins with cysteine framework V (for examples, see AC P0DQQ7 and AC P81755). As to expression, expressed by the venom duct.

It localises to the secreted. The sequence is that of Conotoxin Ar5.4 from Conus arenatus (Sand-dusted cone).